The primary structure comprises 347 residues: Homoisocitrate dehydrogenase (347 aa).

Ile-68–Ser-70 is an NADH binding site. A (2R,3S)-homoisocitrate-binding site is contributed by Ser-70. Ser-81 carries the post-translational modification Phosphoserine. The (2R,3S)-homoisocitrate site is built by Arg-87, Arg-97, Arg-128, Tyr-135, Lys-181, and Asn-183. Asn-183 is an NADH binding site. Residues Asp-213, Asp-237, and Asp-241 each coordinate Mg(2+). NADH contacts are provided by residues Gly-270–Asp-274 and Asn-282.

This sequence belongs to the isocitrate and isopropylmalate dehydrogenases family. Requires Mg(2+) as cofactor.

It carries out the reaction (2R,3S)-homoisocitrate + NAD(+) = 2-oxoadipate + CO2 + NADH. The catalysed reaction is (2R,3S)-iso(homo)2citrate + NAD(+) = 2-oxoheptanedioate + CO2 + NADH. The enzyme catalyses (2R,3S)-iso(homo)3citrate + NAD(+) = 2-oxosuberate + CO2 + NADH. The protein operates within organic acid metabolism; 2-oxosuberate biosynthesis. Functionally, catalyzes the NAD-dependent oxidation and decarboxylation of (2R,3S)-homoisocitrate, (2R,3S)-homo(2)-isocitrate and (2R,3S)-homo(3)-isocitrate, into 2-oxoadipate, 2-oxopimelate (2-oxoheptanedioate), and 2-oxosuberate, respectively. All these substrates are intermediates in the biosynthesis of biotin and of 7-mercaptoheptanoate, a moiety of coenzyme B in methanoarchaea. Is also able to produce 2-oxoazelate from (2R,3S)-homo(4)-isocitrate in vitro, but this substrate is probably not physiologically relevant. Is unable to use any isomer of isocitrate or isopropylmalate as a substrate, and NADP as an oxidant. The polypeptide is Homoisocitrate dehydrogenase (aksF) (Methanocaldococcus jannaschii (strain ATCC 43067 / DSM 2661 / JAL-1 / JCM 10045 / NBRC 100440) (Methanococcus jannaschii)).